Consider the following 1575-residue polypeptide: Ras GTPase-activating-like protein IQGAP2 (1575 aa).

Position 16 is a phosphoserine (Ser16). The Calponin-homology (CH) domain maps to 41-156; sequence LCHLEEAKRW…YCIHALSLYL (116 aa). Thr356 carries the post-translational modification Phosphothreonine. Residues 594-627 enclose the WW domain; sequence ESSEGSWVTLNVQEKYNYYYNTDSKEGSWVPPEL. 2 positions are modified to phosphoserine: Ser595 and Ser599. 3 consecutive IQ domains span residues 690–719, 720–749, and 750–779; these read QTES…VFAG, NVDS…YFED, and HKNE…SENP. A phosphothreonine mark is found at Thr782, Thr881, Thr1002, and Thr1269. One can recognise a Ras-GAP domain in the interval 933–1182; the sequence is YLLLKLFKTA…QEFRKYFQEA (250 aa). Ser1279 and Ser1461 each carry phosphoserine.

Functionally, binds to activated CDC42 and RAC1 but does not seem to stimulate their GTPase activity. Associates with calmodulin. The polypeptide is Ras GTPase-activating-like protein IQGAP2 (Iqgap2) (Mus musculus (Mouse)).